The chain runs to 677 residues: DNA ligase (677 aa).

Residues 43 to 47, 92 to 93, and glutamate 122 contribute to the NAD(+) site; these read DHVYD and SM. Lysine 124 (N6-AMP-lysine intermediate) is an active-site residue. Residues arginine 145, glutamate 179, lysine 295, and lysine 319 each contribute to the NAD(+) site. Zn(2+)-binding residues include cysteine 413, cysteine 416, cysteine 431, and cysteine 436. The 79-residue stretch at 599–677 folds into the BRCT domain; that stretch reads TSDSYFNGKT…EADLDNYLAQ (79 aa).

The protein belongs to the NAD-dependent DNA ligase family. LigA subfamily. Requires Mg(2+) as cofactor. Mn(2+) serves as cofactor.

The enzyme catalyses NAD(+) + (deoxyribonucleotide)n-3'-hydroxyl + 5'-phospho-(deoxyribonucleotide)m = (deoxyribonucleotide)n+m + AMP + beta-nicotinamide D-nucleotide.. DNA ligase that catalyzes the formation of phosphodiester linkages between 5'-phosphoryl and 3'-hydroxyl groups in double-stranded DNA using NAD as a coenzyme and as the energy source for the reaction. It is essential for DNA replication and repair of damaged DNA. The polypeptide is DNA ligase (Latilactobacillus sakei subsp. sakei (strain 23K) (Lactobacillus sakei subsp. sakei)).